The sequence spans 506 residues: Dolichyl pyrophosphate Glc1Man9GlcNAc2 alpha-1,3-glucosyltransferase (506 aa).

The next 12 membrane-spanning stretches (helical) occupy residues 10–30 (RLLLWFFAVATAVKLLLIPSS), 101–121 (VIYFQRISVIVSDLCLLYGVY), 133–153 (NLICALVIWSPGLLIVDHIHF), 176–196 (LLGGFLFAVLLCFKHLFAVTA), 219–239 (LVTIGAVVVAVFAAAYGPFIY), 261–281 (YWAPNFWVFYIILDKGLAVLL), 305–325 (PFAVLPQITPLTTFAMVLLAI), 339–359 (GLVARWVAYAYTCGFLFGWHV), 384–401 (HYFLVSIVSCYSLYPLLY), 406–426 (YPIKVLLLLLHSVVMWLGFAA), 454–474 (YLMGLIIVEIVSQFLHPYFLG), and 479–499 (FLPLMLISTYCTVGIMYSWIW).

Belongs to the ALG6/ALG8 glucosyltransferase family.

It localises to the endoplasmic reticulum membrane. The catalysed reaction is an alpha-D-Glc-(1-&gt;3)-alpha-D-Man-(1-&gt;2)-alpha-D-Man-(1-&gt;2)-alpha-D-Man-(1-&gt;3)-[alpha-D-Man-(1-&gt;2)-alpha-D-Man-(1-&gt;3)-[alpha-D-Man-(1-&gt;2)-alpha-D-Man-(1-&gt;6)]-alpha-D-Man-(1-&gt;6)]-beta-D-Man-(1-&gt;4)-beta-D-GlcNAc-(1-&gt;4)-alpha-D-GlcNAc-diphospho-di-trans,poly-cis-dolichol + a di-trans,poly-cis-dolichyl beta-D-glucosyl phosphate = an alpha-D-Glc-(1-&gt;3)-alpha-D-Glc-(1-&gt;3)-alpha-D-Man-(1-&gt;2)-alpha-D-Man-(1-&gt;2)-alpha-D-Man-(1-&gt;3)-[alpha-D-Man-(1-&gt;2)-alpha-D-Man-(1-&gt;3)-[alpha-D-Man-(1-&gt;2)-alpha-D-Man-(1-&gt;6)]-alpha-D-Man-(1-&gt;6)]-beta-D-Man-(1-&gt;4)-beta-D-GlcNAc-(1-&gt;4)-alpha-D-GlcNAc-diphospho-di-trans,poly-cis-dolichol + a di-trans,poly-cis-dolichyl phosphate + H(+). It functions in the pathway protein modification; protein glycosylation. Its function is as follows. Dolichyl pyrophosphate Glc1Man9GlcNAc2 alpha-1,3-glucosyltransferase that operates in the biosynthetic pathway of dolichol-linked oligosaccharides, the glycan precursors employed in protein asparagine (N)-glycosylation. The assembly of dolichol-linked oligosaccharides begins on the cytosolic side of the endoplasmic reticulum membrane and finishes in its lumen. The sequential addition of sugars to dolichol pyrophosphate produces dolichol-linked oligosaccharides containing fourteen sugars, including two GlcNAcs, nine mannoses and three glucoses. Once assembled, the oligosaccharide is transferred from the lipid to nascent proteins by oligosaccharyltransferases. In the lumen of the endoplasmic reticulum, adds the second glucose residue from dolichyl phosphate glucose (Dol-P-Glc) onto the lipid-linked oligosaccharide intermediate Glc(1)Man(9)GlcNAc(2)-PP-Dol to produce Glc(2)Man(9)GlcNAc(2)-PP-Dol. The protein is Dolichyl pyrophosphate Glc1Man9GlcNAc2 alpha-1,3-glucosyltransferase of Arabidopsis thaliana (Mouse-ear cress).